A 251-amino-acid polypeptide reads, in one-letter code: 5'-nucleotidase SurE (251 aa).

A divalent metal cation-binding residues include aspartate 8, aspartate 9, serine 39, and asparagine 90.

Belongs to the SurE nucleotidase family. Requires a divalent metal cation as cofactor.

It is found in the cytoplasm. The catalysed reaction is a ribonucleoside 5'-phosphate + H2O = a ribonucleoside + phosphate. Its function is as follows. Nucleotidase that shows phosphatase activity on nucleoside 5'-monophosphates. The protein is 5'-nucleotidase SurE of Legionella pneumophila subsp. pneumophila (strain Philadelphia 1 / ATCC 33152 / DSM 7513).